The following is a 386-amino-acid chain: Leupaxin (386 aa).

An N-acetylmethionine modification is found at M1. The LD motif 1 signature appears at 3–15 (ELDALLEELERCT). S19 carries the post-translational modification Phosphoserine. Positions 19-52 (SEEYSNPVSCHLDQQSTEESKIPQTPKTLSSQGN) are disordered. At Y22 the chain carries Phosphotyrosine. Over residues 22–52 (YSNPVSCHLDQQSTEESKIPQTPKTLSSQGN) the composition is skewed to polar residues. Phosphoserine is present on S54. Phosphotyrosine is present on Y62. 2 consecutive short sequence motifs (LD motif) follow at residues 70–82 (NVYS…KESV) and 92–103 (QLDELMAHLSEM). The residue at position 72 (Y72) is a Phosphotyrosine; by LYN. A Phosphoserine modification is found at S81. LIM zinc-binding domains lie at 150–208 (GYCA…RLFS), 209–267 (PRCA…AMFS), 268–326 (PKCG…HRRG), and 327–386 (TLCH…LFSQ).

This sequence belongs to the paxillin family. As to quaternary structure, interacts with unphosphorylated ITGA4. Interacts with AR and SRF. Interacts with PTK2B/PYK2, PTPN22 and PTPN12. Interacts (via LD motif 3) with LYN and the interaction is induced upon B-cell antigen receptor (BCR) activation. Interacts (via LD motif 3) with PTK2/FAK. Post-translationally, phosphorylated on tyrosine residues. Phosphorylation on Tyr-72 is important for its inhibitory function. Bombesin stimulates phosphorylation on Tyr-22, Tyr-62 and Tyr-72. In terms of tissue distribution, expressed in osteoclasts (at protein level). Highly expressed in vascular smooth muscle.

The protein localises to the cytoplasm. It localises to the cell junction. The protein resides in the focal adhesion. Its subcellular location is the nucleus. It is found in the perinuclear region. The protein localises to the cell projection. It localises to the podosome. The protein resides in the cell membrane. In terms of biological role, transcriptional coactivator for androgen receptor (AR) and serum response factor (SRF). Contributes to the regulation of cell adhesion, spreading and cell migration and acts as a negative regulator in integrin-mediated cell adhesion events. Suppresses the integrin-induced tyrosine phosphorylation of paxillin (PXN). May play a critical role as an adapter protein in the formation of the adhesion zone in osteoclasts. Negatively regulates B-cell antigen receptor (BCR) signaling. This chain is Leupaxin (Lpxn), found in Mus musculus (Mouse).